The chain runs to 384 residues: Trophoblast glycoprotein-like (384 aa).

The first 30 residues, Met1–Pro30, serve as a signal peptide directing secretion. Disulfide bonds link Cys31–Cys37 and Cys35–Cys47. Over Cys31–Ser309 the chain is Extracellular. 5 LRR repeats span residues Pro61–Gly84, Leu95–Gly118, Leu119–Gly142, Leu173–Leu196, and Arg198–Ala219. The N-linked (GlcNAc...) asparagine glycan is linked to Asn66. Cystine bridges form between Cys240–Cys266 and Cys242–Cys287. A helical membrane pass occupies residues Tyr310 to Leu330. The Cytoplasmic segment spans residues Asn331–Leu384. The tract at residues Ala361 to Leu384 is disordered. Over residues Pro367 to Leu384 the composition is skewed to low complexity.

The protein resides in the membrane. This Mus musculus (Mouse) protein is Trophoblast glycoprotein-like (Tpbgl).